Consider the following 197-residue polypeptide: Small ribosomal subunit protein uS4c (197 aa).

The S4 RNA-binding domain occupies 92–153 (MRLDAVVYRL…APIVEHAKTF (62 aa)).

The protein belongs to the universal ribosomal protein uS4 family. In terms of assembly, part of the 30S ribosomal subunit. Contacts protein S5. The interaction surface between S4 and S5 is involved in control of translational fidelity.

The protein resides in the plastid. The protein localises to the chloroplast. In terms of biological role, one of the primary rRNA binding proteins, it binds directly to 16S rRNA where it nucleates assembly of the body of the 30S subunit. Functionally, with S5 and S12 plays an important role in translational accuracy. This is Small ribosomal subunit protein uS4c (rps4) from Ostreococcus tauri.